Here is a 240-residue protein sequence, read N- to C-terminus: Purine nucleoside phosphorylase DeoD-type (240 aa).

H5 is a binding site for a purine D-ribonucleoside. Phosphate is bound by residues G21, R25, R44, and R88–S91. A purine D-ribonucleoside-binding positions include E180 to E182 and S204 to D205. D205 serves as the catalytic Proton donor.

Belongs to the PNP/UDP phosphorylase family. Homohexamer; trimer of homodimers.

The catalysed reaction is a purine D-ribonucleoside + phosphate = a purine nucleobase + alpha-D-ribose 1-phosphate. It carries out the reaction a purine 2'-deoxy-D-ribonucleoside + phosphate = a purine nucleobase + 2-deoxy-alpha-D-ribose 1-phosphate. In terms of biological role, catalyzes the reversible phosphorolytic breakdown of the N-glycosidic bond in the beta-(deoxy)ribonucleoside molecules, with the formation of the corresponding free purine bases and pentose-1-phosphate. In Actinobacillus pleuropneumoniae serotype 5b (strain L20), this protein is Purine nucleoside phosphorylase DeoD-type.